Reading from the N-terminus, the 501-residue chain is V-type proton ATPase subunit B 2 (501 aa).

Arginine 392 lines the ATP pocket.

Belongs to the ATPase alpha/beta chains family. In terms of assembly, V-ATPase is a heteromultimeric enzyme made up of two complexes: the ATP-hydrolytic V1 complex and the proton translocation V0 complex. The V1 complex consists of three catalytic AB heterodimers that form a heterohexamer, three peripheral stalks each consisting of EG heterodimers, one central rotor including subunits D and F, and the regulatory subunits C and H. The proton translocation complex V0 consists of the proton transport subunit a, a ring of proteolipid subunits c9c'', rotary subunit d, subunits e and f, and the accessory subunits vah-19/Ac45 and vah-20/PRR. In terms of tissue distribution, predominantly expressed in male and hermaphrodite testis (at protein level).

The protein resides in the cytoplasm. Non-catalytic subunit of the V1 complex of vacuolar(H+)-ATPase (V-ATPase), a multisubunit enzyme composed of a peripheral complex (V1) that hydrolyzes ATP and a membrane integral complex (V0) that translocates protons. V-ATPase is responsible for acidifying and maintaining the pH of intracellular compartments and in some cell types, is targeted to the plasma membrane, where it is responsible for acidifying the extracellular environment. In neurons, required for necrotic cell death probably by promoting intracellular acidification. Required for spermatogenesis where it regulates the fibrous body-membranous organelle (FBMO) morphology in spermatocytes and the acidification of FBMO-derived secretory membranous organelles (MOs) as spermatids mature. The chain is V-type proton ATPase subunit B 2 from Caenorhabditis elegans.